The following is a 279-amino-acid chain: Ribonuclease T2 protein rnst-2 (279 aa).

A signal peptide spans 1–17; the sequence is MKLLLLLCISCIPLAYS. Residues cysteine 37 and cysteine 48 are joined by a disulfide bond. The active site involves histidine 60. The N-linked (GlcNAc...) asparagine glycan is linked to asparagine 68. Residues glutamate 114 and histidine 118 contribute to the active site. Cysteine 200 and cysteine 210 are disulfide-bonded.

This sequence belongs to the RNase T2 family. As to expression, expressed in the pharynx, hypodermis, muscle cells, sheath cells, intestinal cells, the vulva and tail regions.

Its subcellular location is the lysosome. The enzyme catalyses a ribonucleotidyl-ribonucleotide-RNA + H2O = a 3'-end 3'-phospho-ribonucleotide-RNA + a 5'-end dephospho-ribonucleoside-RNA + H(+). Probable endoribonuclease involved in the autophagy-mediated degradation of ribosomal RNA and ribosomal proteins in lysosomes. This chain is Ribonuclease T2 protein rnst-2, found in Caenorhabditis elegans.